A 394-amino-acid polypeptide reads, in one-letter code: NADH-quinone oxidoreductase subunit D 2 (394 aa).

It belongs to the complex I 49 kDa subunit family. As to quaternary structure, NDH-1 is composed of 14 different subunits. Subunits NuoB, C, D, E, F, and G constitute the peripheral sector of the complex.

It is found in the cell membrane. It carries out the reaction a quinone + NADH + 5 H(+)(in) = a quinol + NAD(+) + 4 H(+)(out). Its function is as follows. NDH-1 shuttles electrons from NADH, via FMN and iron-sulfur (Fe-S) centers, to quinones in the respiratory chain. The immediate electron acceptor for the enzyme in this species is believed to be a menaquinone. Couples the redox reaction to proton translocation (for every two electrons transferred, four hydrogen ions are translocated across the cytoplasmic membrane), and thus conserves the redox energy in a proton gradient. This is NADH-quinone oxidoreductase subunit D 2 from Streptomyces griseus subsp. griseus (strain JCM 4626 / CBS 651.72 / NBRC 13350 / KCC S-0626 / ISP 5235).